The sequence spans 347 residues: MSYQVSVAVVGATGYVGVELVRLLLFHPMVKIKYLCATQSIGSLLSSHYDHVLKDSIPVSISCFSSIDLSKVDVIFLCLPHGQSNEIVKKIHNEVKIIIDLSADFRIKDIDTYKEWYGAHCCPDLIQDFVYGLTEIYWEEIKKSRFVACPGCYATSALVPLFPLLRLRLVKSQNIIVDAKSGVSGAGRSVDQKKLFCEIHDVIKSYNISKHRHIPEIEQELCFAACQENINVQFVPNLIPVKRGMLSSIYLELEEGVSPIDIREALLVFYKDSKFIFIDEEKAITTKSVIGTNYCYIGVFPGRIPNTVIIVCNIDNLLKGASGQAVQNFNIMMSCDETTALLNIPYL.

Cys-152 is a catalytic residue.

The protein belongs to the NAGSA dehydrogenase family. Type 1 subfamily.

It is found in the cytoplasm. It carries out the reaction N-acetyl-L-glutamate 5-semialdehyde + phosphate + NADP(+) = N-acetyl-L-glutamyl 5-phosphate + NADPH + H(+). The protein operates within amino-acid biosynthesis; L-arginine biosynthesis; N(2)-acetyl-L-ornithine from L-glutamate: step 3/4. Functionally, catalyzes the NADPH-dependent reduction of N-acetyl-5-glutamyl phosphate to yield N-acetyl-L-glutamate 5-semialdehyde. The chain is N-acetyl-gamma-glutamyl-phosphate reductase from Ehrlichia ruminantium (strain Gardel).